A 125-amino-acid chain; its full sequence is Gene 61 protein (125 aa).

The polypeptide is Gene 61 protein (61) (Mycobacterium phage D29 (Mycobacteriophage D29)).